We begin with the raw amino-acid sequence, 158 residues long: Ribosomal RNA large subunit methyltransferase H (158 aa).

Residues leucine 74, glycine 105, and 124 to 129 contribute to the S-adenosyl-L-methionine site; that span reads LGPLTL.

This sequence belongs to the RNA methyltransferase RlmH family. Homodimer.

It localises to the cytoplasm. It carries out the reaction pseudouridine(1915) in 23S rRNA + S-adenosyl-L-methionine = N(3)-methylpseudouridine(1915) in 23S rRNA + S-adenosyl-L-homocysteine + H(+). Functionally, specifically methylates the pseudouridine at position 1915 (m3Psi1915) in 23S rRNA. The polypeptide is Ribosomal RNA large subunit methyltransferase H (Xylella fastidiosa (strain 9a5c)).